We begin with the raw amino-acid sequence, 98 residues long: Integration host factor subunit alpha (98 aa).

Residues 50–71 (GNFDLRDKNQRPGRNPKTGEDI) are disordered.

Belongs to the bacterial histone-like protein family. Heterodimer of an alpha and a beta chain.

This protein is one of the two subunits of integration host factor, a specific DNA-binding protein that functions in genetic recombination as well as in transcriptional and translational control. This is Integration host factor subunit alpha from Proteus mirabilis (strain HI4320).